The sequence spans 510 residues: Scarecrow-like protein 29 (510 aa).

The segment at 90–142 (LDLPPEIQQPNDQSRKRSHDGFLEAQQVKKSARSKRKAIKSSEKSSKDGNKEG) is disordered. Residues 102-111 (QSRKRSHDGF) show a composition bias toward basic and acidic residues. The segment covering 119–128 (KSARSKRKAI) has biased composition (basic residues). Positions 129 to 142 (KSSEKSSKDGNKEG) are enriched in basic and acidic residues. The GRAS domain maps to 136-510 (KDGNKEGRWA…EAVSFCSLWK (375 aa)). The leucine repeat I (LRI) stretch occupies residues 143–205 (RWAEKLLNPC…HLSSSSVSSS (63 aa)). A VHIID region spans residues 224–294 (LLKFYEVSPW…GPPPRVRITV (71 aa)). The short motif at 259-263 (LHIID) is the VHIID element. Positions 312–337 (NYGSQLLGFARSLKINLQISVLDKLQ) are leucine repeat II (LRII). Residues 347–435 (LIVCAQFRLH…RKLMEGEATK (89 aa)) are PFYRE. Residues 438–510 (MNAGDMNEGK…EAVSFCSLWK (73 aa)) form an SAW region.

Belongs to the GRAS family. As to expression, expressed in seedlings, roots and flowers.

Its subcellular location is the nucleus. Functionally, probable transcription factor involved in plant development. The sequence is that of Scarecrow-like protein 29 (SCL29) from Arabidopsis thaliana (Mouse-ear cress).